The primary structure comprises 460 residues: C4-dicarboxylate transport protein (460 aa).

8 helical membrane-spanning segments follow: residues 21–38, 53–75, 88–110, 153–175, 196–218, 231–253, 301–323, and 363–385; these read LYFQ…IGHF, FIKL…GIAG, YALL…VVNV, IVGA…FGFA, VMFN…AMAF, LGQL…LGSI, VVGL…YLTM, and FIVL…ALIL. The segment at 438 to 460 is disordered; sequence PEDDLGVAEGPTPANAVNTTKTV.

The protein belongs to the dicarboxylate/amino acid:cation symporter (DAACS) (TC 2.A.23) family.

The protein localises to the cell inner membrane. In terms of biological role, responsible for the transport of dicarboxylates such as succinate, fumarate, and malate from the periplasm across the membrane. This chain is C4-dicarboxylate transport protein, found in Pseudomonas syringae pv. tomato (strain ATCC BAA-871 / DC3000).